The sequence spans 284 residues: Nucleotide-binding protein SO_3964 (284 aa).

Residue 8-15 (GRSGSGKS) participates in ATP binding. 56–59 (DVRN) lines the GTP pocket.

This sequence belongs to the RapZ-like family.

In terms of biological role, displays ATPase and GTPase activities. The polypeptide is Nucleotide-binding protein SO_3964 (Shewanella oneidensis (strain ATCC 700550 / JCM 31522 / CIP 106686 / LMG 19005 / NCIMB 14063 / MR-1)).